A 374-amino-acid chain; its full sequence is UPF0754 membrane protein SAR1937 (374 aa).

A run of 2 helical transmembrane segments spans residues 4-24 (LFIIIFMIVVGAIIGGVTNVI) and 354-374 (SLGFILGGIIGFFQGLVAIFV).

Belongs to the UPF0754 family.

The protein localises to the cell membrane. This chain is UPF0754 membrane protein SAR1937, found in Staphylococcus aureus (strain MRSA252).